Here is a 782-residue protein sequence, read N- to C-terminus: Polyribonucleotide nucleotidyltransferase (782 aa).

Mg(2+) contacts are provided by Asp-514 and Asp-520. A KH domain is found at 580-639 (PRIITIKIPVDQIGAVIGPKGKIINQIQDDTGAEITIEDDGTIYIGATEGTAAEAARAAI). The S1 motif domain occupies 651–723 (GERYLGTVVK…ARGKLSLVPV (73 aa)). Over residues 734-753 (AGAGESAASGGAPRSAGGPQ) the composition is skewed to low complexity. Positions 734–782 (AGAGESAASGGAPRSAGGPQPREHQGPGRPRGRGGDHGGEGRQRTRRRH) are disordered. A compositionally biased stretch (basic and acidic residues) spans 766-776 (RGGDHGGEGRQ).

It belongs to the polyribonucleotide nucleotidyltransferase family. The cofactor is Mg(2+).

It localises to the cytoplasm. It carries out the reaction RNA(n+1) + phosphate = RNA(n) + a ribonucleoside 5'-diphosphate. In terms of biological role, involved in mRNA degradation. Catalyzes the phosphorolysis of single-stranded polyribonucleotides processively in the 3'- to 5'-direction. The sequence is that of Polyribonucleotide nucleotidyltransferase from Acidothermus cellulolyticus (strain ATCC 43068 / DSM 8971 / 11B).